We begin with the raw amino-acid sequence, 85 residues long: Delta/kappa-theraphotoxin-Pm1a (85 aa).

An N-terminal signal peptide occupies residues 1 to 19 (MKTFVFIVLVALAFVLTAA). The propeptide occupies 20–43 (KEERANPSELVSALAELVMLDAER). Cystine bridges form between cysteine 50–cysteine 64, cysteine 57–cysteine 69, and cysteine 63–cysteine 77.

This sequence belongs to the neurotoxin 10 (Hwtx-1) family. In terms of tissue distribution, expressed by the venom gland.

The protein localises to the secreted. In terms of biological role, multimodal toxin that enhances nociceptor excitability mainly by the simultaneous stimulation of repetitive firing (through Nav1.8/SCN10A channel current enhancement) and impairment of repolarization (by inhibiting delayed rectifier current of Kv2.1/KCNB1), with a potential contribution from tetrodotoxin-sensitive voltage-gated sodium channels (Nav) modified excitability. Enhances Nav1.8/SCN10A currents (EC(50)=1.1 uM), modifies the channel gating by a right-shift in steady-state inactivation and delays open-state inactivation. Also decreases Kv2.1/KCNB1 currents (IC(50)=0.43 uM) and causes a depolarizing shift in the voltage dependence of activation without change in steady-state inactivation. In addition, inhibits peak currents of human sodium channels (Nav1.1 to Nav1.7, IC(50)=0.38-2.3 uM) and delays fast inactivation of Nav1.1/SCN1A, Nav1.3/SCN3A, Nav1.6/SCN8A, and Nav1.7/SCN9A. In small dorsal root ganglion neurons, induces hyperexcitability by enhancing tetrodotoxin-resistant sodium currents, impairing repolarization and lowering the threshold of action potential firing, consistent with the severe pain associated with envenomation. In vivo, elicits nocifensive behavior in mice after intraplantar injection. The chain is Delta/kappa-theraphotoxin-Pm1a from Pelinobius muticus (King baboon spider).